We begin with the raw amino-acid sequence, 371 residues long: Chaperone protein DnaJ (371 aa).

A J domain is found at D5–G69. The CR-type zinc finger occupies G133 to R215. Residues C146, C149, C163, C166, C189, C192, C203, and C206 each contribute to the Zn(2+) site. CXXCXGXG motif repeat units lie at residues C146–G153, C163–G170, C189–G196, and C203–G210.

The protein belongs to the DnaJ family. In terms of assembly, homodimer. Zn(2+) serves as cofactor.

It localises to the cytoplasm. Its function is as follows. Participates actively in the response to hyperosmotic and heat shock by preventing the aggregation of stress-denatured proteins and by disaggregating proteins, also in an autonomous, DnaK-independent fashion. Unfolded proteins bind initially to DnaJ; upon interaction with the DnaJ-bound protein, DnaK hydrolyzes its bound ATP, resulting in the formation of a stable complex. GrpE releases ADP from DnaK; ATP binding to DnaK triggers the release of the substrate protein, thus completing the reaction cycle. Several rounds of ATP-dependent interactions between DnaJ, DnaK and GrpE are required for fully efficient folding. Also involved, together with DnaK and GrpE, in the DNA replication of plasmids through activation of initiation proteins. In Bacillus cereus (strain ATCC 10987 / NRS 248), this protein is Chaperone protein DnaJ.